The sequence spans 504 residues: Dihydrolipoamide dehydrogenase (504 aa).

The transit peptide at 1–34 (MLSQRLIGRTAVKSAFRPSGLPTVVNASRWRRGY) directs the protein to the mitochondrion. FAD is bound by residues 69–78 (EKRGTLGGTC), lysine 87, glycine 151, and 180–182 (TGS). Residues cysteine 78 and cysteine 83 are joined by a disulfide bond. Residues 217-224 (GGGIIGLE), glutamate 240, valine 275, and glycine 310 each bind NAD(+). Residues aspartate 351 and 357-360 (MLAH) each bind FAD. Histidine 483 serves as the catalytic Proton acceptor.

It belongs to the class-I pyridine nucleotide-disulfide oxidoreductase family. As to quaternary structure, eukaryotic pyruvate dehydrogenase (PDH) complexes are organized as a core consisting of the oligomeric dihydrolipoamide acetyl-transferase (E2), around which are arranged multiple copies of pyruvate dehydrogenase (E1), dihydrolipoamide dehydrogenase (E3) and protein X (E3BP) bound by non-covalent bonds. The Chaetomium thermophilum PDH complex contains 60 E2 units, 12 E3BP units, about 20 E1 units, and 12 or more E3 units. The units are organized in 1 E2 60-mer, 4 E3BP trimers, about 20 E1 tetramers, and a maximum of 12 E3 dimers. The E3BP trimers are bound inside the icosahedral core with tetrahedral symmetry. FAD serves as cofactor.

The protein resides in the mitochondrion. The catalysed reaction is N(6)-[(R)-dihydrolipoyl]-L-lysyl-[protein] + NAD(+) = N(6)-[(R)-lipoyl]-L-lysyl-[protein] + NADH + H(+). Functionally, lipoamide dehydrogenase is a component of the alpha-ketoacid dehydrogenase complexes. This includes the pyruvate dehydrogenase complex, which catalyzes the overall conversion of pyruvate to acetyl-CoA and CO(2). Also acts as a component of the glycine cleavage system (glycine decarboxylase complex), which catalyzes the degradation of glycine. The 10-megadalton pyruvate dehydrogenase complex contains multiple copies of three enzymatic components: pyruvate dehydrogenase (E1), dihydrolipoamide acetyltransferase (E2) and lipoamide dehydrogenase (E3) and catalyzes the overall oxidative decarboxylation of pyruvate to form acetyl-CoA and CO(2). Within the complex, pyruvate and thiamine pyrophosphate (TPP or vitamin B1) are bound by pyruvate dehydrogenase E1 subunits alpha and beta and pyruvate is decarboxylated leading to the 2-carbon hydrohyethyl bound to TPP. The E2 component contains covalently-bound lipoyl cofactors and transfers the hydroxyethyl group from TPP to an oxidized form of covalently bound lipoamide, and the resulting acetyl group is then transferred to free coenzyme A to form acetyl-CoA and reduced dihydrolipoamide-E2. Finally, the flavoprotein dihydrolipoamide dehydrogenase (E3) re-oxidizes the lipoyl group of dihydrolipoamide-E2 to form lipoamide-E2 and NADH. A fourth subunit, E3BP, is responsible for tethering E3 in proximity to the core, forming the entire metabolon. This Chaetomium thermophilum (strain DSM 1495 / CBS 144.50 / IMI 039719) (Thermochaetoides thermophila) protein is Dihydrolipoamide dehydrogenase.